A 353-amino-acid polypeptide reads, in one-letter code: Heterogeneous nuclear ribonucleoproteins A2/B1 (353 aa).

At M1 the chain carries N-acetylmethionine. T4 is modified (phosphothreonine). L5 is covalently cross-linked (Glycyl lysine isopeptide (Lys-Gly) (interchain with G-Cter in SUMO2)). Positions 9-15 (PLERKKR) match the Nuclear localization signal motif. 2 consecutive RRM domains span residues 21–104 (RKLF…ESGK) and 112–191 (KKLF…LSRQ). K22 is covalently cross-linked (Glycyl lysine isopeptide (Lys-Gly) (interchain with G-Cter in SUMO2)). S29 is modified (phosphoserine). R38 carries the post-translational modification Omega-N-methylarginine. S85 carries the post-translational modification Phosphoserine. At K104 the chain carries N6,N6-dimethyllysine; alternate. K104 participates in a covalent cross-link: Glycyl lysine isopeptide (Lys-Gly) (interchain with G-Cter in SUMO2); alternate. Glycyl lysine isopeptide (Lys-Gly) (interchain with G-Cter in SUMO2) cross-links involve residues K112, K120, and K137. T140 bears the Phosphothreonine mark. Residue S149 is modified to Phosphoserine. A Glycyl lysine isopeptide (Lys-Gly) (interchain with G-Cter in SUMO2) cross-link involves residue K152. The residue at position 159 (T159) is a Phosphothreonine. Glycyl lysine isopeptide (Lys-Gly) (interchain with G-Cter in SUMO2); alternate cross-links involve residues K168 and K173. N6-acetyllysine; alternate is present on residues K168 and K173. At T176 the chain carries Phosphothreonine. K186 is covalently cross-linked (Glycyl lysine isopeptide (Lys-Gly) (interchain with G-Cter in SUMO2)). Phosphoserine occurs at positions 189 and 201. Residues 193 to 353 (MQEVQSSRSG…SGGYGGRSRY (161 aa)) form a disordered region. The segment covering 202–223 (GRGGNFGFGDSRGGGGNFGPGP) has biased composition (gly residues). R203 is modified (asymmetric dimethylarginine; alternate). R203 is modified (dimethylated arginine; alternate). At R203 the chain carries Omega-N-methylarginine; alternate. A Phosphoserine modification is found at S212. R213 is subject to Asymmetric dimethylarginine; alternate. Residue R213 is modified to Dimethylated arginine; alternate. Omega-N-methylarginine; alternate is present on R213. S225 carries the phosphoserine modification. R228 is modified (omega-N-methylarginine). S231 and S236 each carry phosphoserine. An Omega-N-methylarginine modification is found at R238. S259 carries the post-translational modification Phosphoserine. Asymmetric dimethylarginine; alternate is present on R266. R266 carries the post-translational modification Omega-N-methylarginine; alternate. A nuclear targeting sequence region spans residues 308–347 (QQPSNYGPMKSGNFGGSRNMGGPYGGGNYGPGGSGGSGGY). The segment covering 320 to 353 (NFGGSRNMGGPYGGGNYGPGGSGGSGGYGGRSRY) has biased composition (gly residues). Position 324 is a phosphoserine (S324). R325 is subject to Omega-N-methylarginine. Y331 bears the Phosphotyrosine mark. 2 positions are modified to phosphoserine: S341 and S344. Y347 carries the phosphotyrosine modification. R350 bears the Omega-N-methylarginine mark.

As to quaternary structure, homodimer; dimerization is required for nucleocytoplasmic translocation. Identified in the spliceosome C complex. Identified in a IGF2BP1-dependent mRNP granule complex containing untranslated mRNAs. Interacts with IGF2BP1. Interacts with C9orf72. Interacts with DGCR8. Interacts with TARDBP. Interacts with CKAP5. Interacts with TBK1. Interacts with STING1. Interacts with SRC. Interacts with PPIA/CYPA. Interacts (via C-terminus) with FAM76B; the interaction results in retention of HNRNPA2B1 in the nucleus and inhibition of the NF-kappa-B-mediated inflammatory pathway. Interacts with NF-kappa-B inhibitors NFKBIA and NFKBIE; the interaction may be mediated by the RRM2 domain of HNRNPA2B1, and HNRNPA2B1 may interact simultaneously with FAM76B and either NFKBIA or NFKBIE to form a complex. Sumoylated in exosomes, promoting miRNAs-binding. Post-translationally, asymmetric dimethylation at Arg-266 constitutes the major methylation site. According to a report, methylation affects subcellular location and promotes nuclear localization. According to another report, methylation at Arg-266 does not influence nucleocytoplasmic shuttling.

Its subcellular location is the nucleus. It is found in the nucleoplasm. The protein localises to the cytoplasm. The protein resides in the cytoplasmic granule. It localises to the secreted. Its subcellular location is the extracellular exosome. Heterogeneous nuclear ribonucleoprotein (hnRNP) that associates with nascent pre-mRNAs, packaging them into hnRNP particles. The hnRNP particle arrangement on nascent hnRNA is non-random and sequence-dependent and serves to condense and stabilize the transcripts and minimize tangling and knotting. Packaging plays a role in various processes such as transcription, pre-mRNA processing, RNA nuclear export, subcellular location, mRNA translation and stability of mature mRNAs. Forms hnRNP particles with at least 20 other different hnRNP and heterogeneous nuclear RNA in the nucleus. Involved in transport of specific mRNAs to the cytoplasm in oligodendrocytes and neurons: acts by specifically recognizing and binding the A2RE (21 nucleotide hnRNP A2 response element) or the A2RE11 (derivative 11 nucleotide oligonucleotide) sequence motifs present on some mRNAs, and promotes their transport to the cytoplasm. Specifically binds single-stranded telomeric DNA sequences, protecting telomeric DNA repeat against endonuclease digestion. Also binds other RNA molecules, such as primary miRNA (pri-miRNAs): acts as a nuclear 'reader' of the N6-methyladenosine (m6A) mark by specifically recognizing and binding a subset of nuclear m6A-containing pri-miRNAs. Binding to m6A-containing pri-miRNAs promotes pri-miRNA processing by enhancing binding of DGCR8 to pri-miRNA transcripts. Involved in miRNA sorting into exosomes following sumoylation, possibly by binding (m6A)-containing pre-miRNAs. Acts as a regulator of efficiency of mRNA splicing, possibly by binding to m6A-containing pre-mRNAs. Plays a role in the splicing of pyruvate kinase PKM by binding repressively to sequences flanking PKM exon 9, inhibiting exon 9 inclusion and resulting in exon 10 inclusion and production of the PKM M2 isoform. Also plays a role in the activation of the innate immune response. Mechanistically, senses the presence of viral DNA in the nucleus, homodimerizes and is demethylated by JMJD6. In turn, translocates to the cytoplasm where it activates the TBK1-IRF3 pathway, leading to interferon alpha/beta production. Functionally, (Microbial infection) Involved in the transport of HIV-1 genomic RNA out of the nucleus, to the microtubule organizing center (MTOC), and then from the MTOC to the cytoplasm: acts by specifically recognizing and binding the A2RE (21 nucleotide hnRNP A2 response element) sequence motifs present on HIV-1 genomic RNA, and promotes its transport. The polypeptide is Heterogeneous nuclear ribonucleoproteins A2/B1 (HNRNPA2B1) (Homo sapiens (Human)).